A 381-amino-acid chain; its full sequence is Succinyl-diaminopimelate desuccinylase (381 aa).

His-69 contributes to the Zn(2+) binding site. Residue Asp-71 is part of the active site. Residue Asp-103 coordinates Zn(2+). The active-site Proton acceptor is the Glu-137. Residues Glu-138, Glu-166, and His-355 each coordinate Zn(2+).

This sequence belongs to the peptidase M20A family. DapE subfamily. Homodimer. It depends on Zn(2+) as a cofactor. The cofactor is Co(2+).

The catalysed reaction is N-succinyl-(2S,6S)-2,6-diaminopimelate + H2O = (2S,6S)-2,6-diaminopimelate + succinate. It functions in the pathway amino-acid biosynthesis; L-lysine biosynthesis via DAP pathway; LL-2,6-diaminopimelate from (S)-tetrahydrodipicolinate (succinylase route): step 3/3. Functionally, catalyzes the hydrolysis of N-succinyl-L,L-diaminopimelic acid (SDAP), forming succinate and LL-2,6-diaminopimelate (DAP), an intermediate involved in the bacterial biosynthesis of lysine and meso-diaminopimelic acid, an essential component of bacterial cell walls. The sequence is that of Succinyl-diaminopimelate desuccinylase from Rickettsia africae (strain ESF-5).